The primary structure comprises 418 residues: Zinc metalloproteinase nas-8 (418 aa).

The first 28 residues, M1 to A28, serve as a signal peptide directing secretion. A propeptide spanning residues Q29–R100 is cleaved from the precursor. The Peptidase M12A domain maps to N101–P296. 5 disulfides stabilise this stretch: C143-C295, C165-C184, C347-C381, C354-C374, and C361-C378. H192 is a Zn(2+) binding site. E193 is an active-site residue. Residues H196 and H202 each contribute to the Zn(2+) site. Residues C347–C381 enclose the ShKT domain.

The cofactor is Zn(2+).

Its subcellular location is the secreted. The catalysed reaction is Hydrolysis of peptide bonds in substrates containing five or more amino acids, preferentially with Ala in P1', and Pro in P2'.. Inhibited by ethylene glycol-bis(2-aminoethylether)-N,N,N,N-tetraacetic acid (EGTA), ethylenediaminetetraacetic acid (EDTA) and o-phenanthroline. Its function is as follows. Metalloprotease. In Steinernema carpocapsae (Entomopathogenic nematode), this protein is Zinc metalloproteinase nas-8.